The sequence spans 636 residues: 1-deoxy-D-xylulose-5-phosphate synthase (636 aa).

Thiamine diphosphate contacts are provided by residues histidine 72 and 113-115 (GHA). Aspartate 144 is a binding site for Mg(2+). Residues 145-146 (GA), asparagine 174, tyrosine 287, and glutamate 370 each bind thiamine diphosphate. Asparagine 174 contacts Mg(2+).

This sequence belongs to the transketolase family. DXPS subfamily. Homodimer. Requires Mg(2+) as cofactor. The cofactor is thiamine diphosphate.

The enzyme catalyses D-glyceraldehyde 3-phosphate + pyruvate + H(+) = 1-deoxy-D-xylulose 5-phosphate + CO2. It functions in the pathway metabolic intermediate biosynthesis; 1-deoxy-D-xylulose 5-phosphate biosynthesis; 1-deoxy-D-xylulose 5-phosphate from D-glyceraldehyde 3-phosphate and pyruvate: step 1/1. Its function is as follows. Catalyzes the acyloin condensation reaction between C atoms 2 and 3 of pyruvate and glyceraldehyde 3-phosphate to yield 1-deoxy-D-xylulose-5-phosphate (DXP). The chain is 1-deoxy-D-xylulose-5-phosphate synthase from Rippkaea orientalis (strain PCC 8801 / RF-1) (Cyanothece sp. (strain PCC 8801)).